The chain runs to 134 residues: Small ribosomal subunit protein eS24A (134 aa).

Ser-2 bears the N-acetylserine mark. Positions 100 to 134 are disordered; it reads IQKVARQQRKQRKNRGKKVFGTGKRLAKRKSKQQD. Basic residues-rich tracts occupy residues 105-117 and 124-134; these read RQQRKQRKNRGKK and RLAKRKSKQQD.

This sequence belongs to the eukaryotic ribosomal protein eS24 family. Component of the small ribosomal subunit (SSU). Mature yeast ribosomes consist of a small (40S) and a large (60S) subunit. The 40S small subunit contains 1 molecule of ribosomal RNA (18S rRNA) and at least 33 different proteins. The large 60S subunit contains 3 rRNA molecules (25S, 5.8S and 5S rRNA) and at least 46 different proteins.

Its subcellular location is the cytoplasm. Its function is as follows. Component of the ribosome, a large ribonucleoprotein complex responsible for the synthesis of proteins in the cell. The small ribosomal subunit (SSU) binds messenger RNAs (mRNAs) and translates the encoded message by selecting cognate aminoacyl-transfer RNA (tRNA) molecules. The large subunit (LSU) contains the ribosomal catalytic site termed the peptidyl transferase center (PTC), which catalyzes the formation of peptide bonds, thereby polymerizing the amino acids delivered by tRNAs into a polypeptide chain. The nascent polypeptides leave the ribosome through a tunnel in the LSU and interact with protein factors that function in enzymatic processing, targeting, and the membrane insertion of nascent chains at the exit of the ribosomal tunnel. The polypeptide is Small ribosomal subunit protein eS24A (rps2401) (Schizosaccharomyces pombe (strain 972 / ATCC 24843) (Fission yeast)).